A 616-amino-acid chain; its full sequence is Chaperone protein HtpG (616 aa).

Residues 1-333 (MKKQFDTEVN…CQDLPLNVSR (333 aa)) form an a; substrate-binding region. Positions 334-542 (EILQQNKILS…SNDPTYQMQK (209 aa)) are b. Positions 543 to 616 (IMLSMGQEVK…INEFIEKDFL (74 aa)) are c.

The protein belongs to the heat shock protein 90 family. Homodimer.

Its subcellular location is the cytoplasm. In terms of biological role, molecular chaperone. Has ATPase activity. The sequence is that of Chaperone protein HtpG from Borreliella burgdorferi (strain ATCC 35210 / DSM 4680 / CIP 102532 / B31) (Borrelia burgdorferi).